A 486-amino-acid chain; its full sequence is MIQGTTSDAGKSTLVAGLCRLARRTGARVAPFKPQNMALNSAVTANGGEIGRAQALQALAAGIEAHTDLNPVLLKPTGDRGAQVIIHGTARANLDARAYHDYKPTAMRAVLESYGRLRGAYDAVIVEGAGSPAEINLREGDIANMGFAEAVDCPVVLVADIDRGGVFAHLVGTLACLSDSERARVRGFVINRFRGDPALLEPGLRWLEARTGKPVLGVLPYLHGLTLDAEDMLPASARTSAARRDAGVLRIVVPALPRISNHTDFDALRAHPRVDFTYWKRGPVPDADLLILPGSKNVLADLAWLRDAGWDALIKRHLRYGGKVIGICGGMQMLGRTLADPHGVEGAAGATSAGLGLLDYATTLTPEKTLVNAAGRLAFGGDARVAGYEIHMGRTEGPALASPALMLAGRGGERPDGAVSADGQILATYLHGLFDTPHACAALLEWAGLDGAEALDYPALREASLERLADTFAEHLDLDRVFAAFA.

The GATase cobBQ-type domain occupies Val248–Ala439. The Nucleophile role is filled by Cys328. Residue His431 is part of the active site.

It belongs to the CobB/CobQ family. CobQ subfamily.

It functions in the pathway cofactor biosynthesis; adenosylcobalamin biosynthesis. Its function is as follows. Catalyzes amidations at positions B, D, E, and G on adenosylcobyrinic A,C-diamide. NH(2) groups are provided by glutamine, and one molecule of ATP is hydrogenolyzed for each amidation. The polypeptide is Cobyric acid synthase (Burkholderia mallei (strain ATCC 23344)).